Here is a 466-residue protein sequence, read N- to C-terminus: ATP synthase subunit beta (466 aa).

156 to 163 (GGAGVGKT) contributes to the ATP binding site.

The protein belongs to the ATPase alpha/beta chains family. In terms of assembly, F-type ATPases have 2 components, CF(1) - the catalytic core - and CF(0) - the membrane proton channel. CF(1) has five subunits: alpha(3), beta(3), gamma(1), delta(1), epsilon(1). CF(0) has three main subunits: a(1), b(2) and c(9-12). The alpha and beta chains form an alternating ring which encloses part of the gamma chain. CF(1) is attached to CF(0) by a central stalk formed by the gamma and epsilon chains, while a peripheral stalk is formed by the delta and b chains.

It localises to the cell membrane. It catalyses the reaction ATP + H2O + 4 H(+)(in) = ADP + phosphate + 5 H(+)(out). In terms of biological role, produces ATP from ADP in the presence of a proton gradient across the membrane. The catalytic sites are hosted primarily by the beta subunits. This is ATP synthase subunit beta from Polynucleobacter asymbioticus (strain DSM 18221 / CIP 109841 / QLW-P1DMWA-1) (Polynucleobacter necessarius subsp. asymbioticus).